The primary structure comprises 134 residues: Aspartate 1-decarboxylase (134 aa).

The active-site Schiff-base intermediate with substrate; via pyruvic acid is the Ser25. At Ser25 the chain carries Pyruvic acid (Ser). Thr57 contributes to the substrate binding site. Tyr58 serves as the catalytic Proton donor. 73–75 provides a ligand contact to substrate; it reads GAA.

This sequence belongs to the PanD family. As to quaternary structure, heterooctamer of four alpha and four beta subunits. Pyruvate serves as cofactor. In terms of processing, is synthesized initially as an inactive proenzyme, which is activated by self-cleavage at a specific serine bond to produce a beta-subunit with a hydroxyl group at its C-terminus and an alpha-subunit with a pyruvoyl group at its N-terminus.

It is found in the cytoplasm. The catalysed reaction is L-aspartate + H(+) = beta-alanine + CO2. Its pathway is cofactor biosynthesis; (R)-pantothenate biosynthesis; beta-alanine from L-aspartate: step 1/1. Catalyzes the pyruvoyl-dependent decarboxylation of aspartate to produce beta-alanine. This Sulfurihydrogenibium sp. (strain YO3AOP1) protein is Aspartate 1-decarboxylase.